A 548-amino-acid polypeptide reads, in one-letter code: T-complex protein 1 subunit theta (548 aa).

Residues 527–548 (QATGGPKPRGPKAQDEDDDGMA) form a disordered region.

Belongs to the TCP-1 chaperonin family. In terms of assembly, heterooligomeric complex.

Its subcellular location is the cytoplasm. Functionally, molecular chaperone; assists the folding of proteins upon ATP hydrolysis. Known to play a role, in vitro, in the folding of actin and tubulin. Required for correct subcellular localization of pgl-1. This chain is T-complex protein 1 subunit theta (cct-8), found in Caenorhabditis elegans.